The primary structure comprises 102 residues: MNKIIKESTNFSRYLRTGGVLNSLRTTSKFVYINNNSYLTHGGFDGNVATIFNISEFNYINSSAKGSLLTYKSITFFCPRYFKKRPLGRHAKGKGKSDEKIL.

This is an uncharacterized protein from Saccharomyces cerevisiae (strain ATCC 204508 / S288c) (Baker's yeast).